The sequence spans 537 residues: Phosphoenolpyruvate carboxykinase (ATP) (537 aa).

Substrate-binding residues include Arg64, Tyr204, and Lys210. ATP is bound by residues Lys210, His229, and 245–253; that span reads GLSGTGKTT. Positions 210 and 229 each coordinate Mn(2+). Asp266 provides a ligand contact to Mn(2+). Residues Glu294, Arg330, 446–447, and Thr452 each bind ATP; that span reads RI. Arg330 is a binding site for substrate.

This sequence belongs to the phosphoenolpyruvate carboxykinase (ATP) family. As to quaternary structure, monomer. Requires Mn(2+) as cofactor.

Its subcellular location is the cytoplasm. It catalyses the reaction oxaloacetate + ATP = phosphoenolpyruvate + ADP + CO2. The protein operates within carbohydrate biosynthesis; gluconeogenesis. Its function is as follows. Involved in the gluconeogenesis. Catalyzes the conversion of oxaloacetate (OAA) to phosphoenolpyruvate (PEP) through direct phosphoryl transfer between the nucleoside triphosphate and OAA. This chain is Phosphoenolpyruvate carboxykinase (ATP), found in Aliivibrio fischeri (strain ATCC 700601 / ES114) (Vibrio fischeri).